A 395-amino-acid polypeptide reads, in one-letter code: Elongation factor Tu (395 aa).

The 195-residue stretch at 10–204 (KEHANIGTIG…AVDDFIPTPE (195 aa)) folds into the tr-type G domain. Positions 19 to 26 (GHVDHGKT) are G1. 19-26 (GHVDHGKT) contacts GTP. Residue Thr-26 coordinates Mg(2+). Positions 60–64 (GITIN) are G2. The tract at residues 81–84 (DCPG) is G3. GTP-binding positions include 81–85 (DCPGH) and 136–139 (NKVD). The interval 136 to 139 (NKVD) is G4. The tract at residues 174 to 176 (SAL) is G5.

The protein belongs to the TRAFAC class translation factor GTPase superfamily. Classic translation factor GTPase family. EF-Tu/EF-1A subfamily. Monomer.

The protein resides in the cytoplasm. The enzyme catalyses GTP + H2O = GDP + phosphate + H(+). GTP hydrolase that promotes the GTP-dependent binding of aminoacyl-tRNA to the A-site of ribosomes during protein biosynthesis. In Staphylococcus saprophyticus subsp. saprophyticus (strain ATCC 15305 / DSM 20229 / NCIMB 8711 / NCTC 7292 / S-41), this protein is Elongation factor Tu.